The primary structure comprises 184 residues: ATP synthase subunit delta (184 aa).

This sequence belongs to the ATPase delta chain family. As to quaternary structure, F-type ATPases have 2 components, F(1) - the catalytic core - and F(0) - the membrane proton channel. F(1) has five subunits: alpha(3), beta(3), gamma(1), delta(1), epsilon(1). F(0) has three main subunits: a(1), b(2) and c(10-14). The alpha and beta chains form an alternating ring which encloses part of the gamma chain. F(1) is attached to F(0) by a central stalk formed by the gamma and epsilon chains, while a peripheral stalk is formed by the delta and b chains.

It localises to the cell inner membrane. Functionally, f(1)F(0) ATP synthase produces ATP from ADP in the presence of a proton or sodium gradient. F-type ATPases consist of two structural domains, F(1) containing the extramembraneous catalytic core and F(0) containing the membrane proton channel, linked together by a central stalk and a peripheral stalk. During catalysis, ATP synthesis in the catalytic domain of F(1) is coupled via a rotary mechanism of the central stalk subunits to proton translocation. This protein is part of the stalk that links CF(0) to CF(1). It either transmits conformational changes from CF(0) to CF(1) or is implicated in proton conduction. In Dichelobacter nodosus (strain VCS1703A), this protein is ATP synthase subunit delta.